The following is a 206-amino-acid chain: Ribonuclease HII (206 aa).

Residues 18–206 (LRIAGVDEVG…PVHNILYQEK (189 aa)) form the RNase H type-2 domain. Asp-24, Glu-25, and Asp-115 together coordinate a divalent metal cation.

The protein belongs to the RNase HII family. Requires Mn(2+) as cofactor. Mg(2+) is required as a cofactor.

It is found in the cytoplasm. The catalysed reaction is Endonucleolytic cleavage to 5'-phosphomonoester.. Endonuclease that specifically degrades the RNA of RNA-DNA hybrids. The chain is Ribonuclease HII from Dinoroseobacter shibae (strain DSM 16493 / NCIMB 14021 / DFL 12).